Consider the following 250-residue polypeptide: Triosephosphate isomerase (250 aa).

9–11 (NWK) is a substrate binding site. The Electrophile role is filled by His95. The active-site Proton acceptor is Glu167. Substrate is bound by residues Gly173, Ser213, and 234-235 (GG).

This sequence belongs to the triosephosphate isomerase family. As to quaternary structure, homodimer.

Its subcellular location is the cytoplasm. The catalysed reaction is D-glyceraldehyde 3-phosphate = dihydroxyacetone phosphate. Its pathway is carbohydrate biosynthesis; gluconeogenesis. The protein operates within carbohydrate degradation; glycolysis; D-glyceraldehyde 3-phosphate from glycerone phosphate: step 1/1. Functionally, involved in the gluconeogenesis. Catalyzes stereospecifically the conversion of dihydroxyacetone phosphate (DHAP) to D-glyceraldehyde-3-phosphate (G3P). This Herpetosiphon aurantiacus (strain ATCC 23779 / DSM 785 / 114-95) protein is Triosephosphate isomerase.